The primary structure comprises 404 residues: Tryptophan synthase beta chain (404 aa).

Lysine 94 carries the N6-(pyridoxal phosphate)lysine modification.

It belongs to the TrpB family. As to quaternary structure, tetramer of two alpha and two beta chains. Pyridoxal 5'-phosphate is required as a cofactor.

It carries out the reaction (1S,2R)-1-C-(indol-3-yl)glycerol 3-phosphate + L-serine = D-glyceraldehyde 3-phosphate + L-tryptophan + H2O. It participates in amino-acid biosynthesis; L-tryptophan biosynthesis; L-tryptophan from chorismate: step 5/5. In terms of biological role, the beta subunit is responsible for the synthesis of L-tryptophan from indole and L-serine. In Staphylococcus aureus (strain USA300), this protein is Tryptophan synthase beta chain.